Reading from the N-terminus, the 228-residue chain is Elongation factor 1-beta (228 aa).

The interval 74 to 116 (ASKAFTAYGPEGSEASANPKDKPAEEEEEEDLFASDSEDEDPA) is disordered. The igE-binding stretch occupies residues 84-93 (EGSEASANPK). Over residues 97–115 (AEEEEEEDLFASDSEDEDP) the composition is skewed to acidic residues.

This sequence belongs to the EF-1-beta/EF-1-delta family. As to quaternary structure, EF-1 is composed of 4 subunits: alpha, beta, delta, and gamma.

Its function is as follows. EF-1-beta and EF-1-delta stimulate the exchange of GDP bound to EF-1-alpha to GTP. The protein is Elongation factor 1-beta of Penicillium citrinum.